The following is a 174-amino-acid chain: Ribosome maturation factor RimM (174 aa).

In terms of domain architecture, PRC barrel spans 98–172 (AGEYYYHQIV…VVTVELMEGL (75 aa)).

Belongs to the RimM family. Binds ribosomal protein uS19.

It localises to the cytoplasm. Its function is as follows. An accessory protein needed during the final step in the assembly of 30S ribosomal subunit, possibly for assembly of the head region. Essential for efficient processing of 16S rRNA. May be needed both before and after RbfA during the maturation of 16S rRNA. It has affinity for free ribosomal 30S subunits but not for 70S ribosomes. The protein is Ribosome maturation factor RimM of Lactiplantibacillus plantarum (strain ATCC BAA-793 / NCIMB 8826 / WCFS1) (Lactobacillus plantarum).